The following is a 439-amino-acid chain: MDLNGFLLDEEGAFSLSGFQEFTFLPRHQQLSERVRKRLYYGWDKECTLDNLSSPVADIAVELLQKVAPSPIRRLQKKYVSHVSREACISPCSMMLALVYIERLRHRNPEYLQQISSSDLFLISMMVASKYLYDEGEEEEVFNDEWGAAGKVDVQTMNTLEMNFLSAIDWSLYTDPRELFEVLSWLEGRVAEKQGMWRGWFTYTDLCVLMEQSMWQQALGHFYQQVVKLACLLGVVYLTGFAAVFTSIAVVHRAVCTRSTSITALRPALIPVESGCQLGAQPALAPEQPQPKLPDVSPPSSTHCLGENETAEELRRGGVTATALYLWGSVMTALSYVKAPDIALHKSPLQAPLRKVPTACERSNRTAPVTAPNQPGPFGLAVLLAPPALHCHTCSAAARPTWDATPNHRKDWLDPLGLRQCFLHAALDLGRIKSFIFPS.

Residues C231–V251 traverse the membrane as a helical segment. The segment at A283–T302 is disordered.

The protein belongs to the CNPPD1 family.

The protein resides in the membrane. The protein is Protein CNPPD1 (CNPPD1) of Gallus gallus (Chicken).